The sequence spans 37 residues: MKVRASVKKICKDCKIIRRKGVIRVICITKRHNQRQG.

This sequence belongs to the bacterial ribosomal protein bL36 family.

This Desulforapulum autotrophicum (strain ATCC 43914 / DSM 3382 / VKM B-1955 / HRM2) (Desulfobacterium autotrophicum) protein is Large ribosomal subunit protein bL36.